Here is a 1320-residue protein sequence, read N- to C-terminus: Poly [ADP-ribose] polymerase tankyrase-1 (1320 aa).

Basic residues predominate over residues 1 to 15; that stretch reads MAASRRSQHHHHHHQ. Disordered regions lie at residues 1–88 and 111–152; these read MAAS…DGAV and AGGG…AAGV. The span at 25–46 shows a compositional bias: pro residues; sequence SAPPPPPPPPLSPGLAPGPTPA. The segment covering 69-82 has biased composition (basic and acidic residues); the sequence is DGSRDPPDRPRSPD. Residues 120–152 are compositionally biased toward low complexity; it reads NSASSASSPTSSSSSSPSSPGSSLAESPEAAGV. ANK repeat units lie at residues 174–202, 208–237, 241–270, 274–303, 361–390, 394–423, 427–456, 514–546, 550–579, 583–612, 676–705, 709–738, 742–771, 775–803, 829–858, 862–891, 895–924, and 928–957; these read GALRELLEACRNGDVSRVKRLVDAANVNA, RKSSPLHFAAGFGRKDVVEHLLQMGANVHA, GGLIPLHNACSFGHAEVVSLLLCQGADPNA, WNYTPLHEAAIKGKIDVCIVLLQHGADPNI, RKSTPLHLAAGYNRVRIVQLLLQHGADVHA, GGLVPLHNACSYGHYEVTELLLKHGACVNA, WQFTPLHEAASKNRVEVCSLLLSHGADPTL, SHETALHCAVASLHPKRKQVAELLLRKGANVNE, DFMTPLHVAAERAHNDVMEVLHKHGAKMNA, LGQTALHRAALAGHLQTCRLLLSYGSDPSI, RHSTPLHFAAGYNRVSVVEYLLHHGADVHA, GGLVPLHNACSYGHYEVAELLVRHGASVNV, WKFTPLHEAAAKGKYEICKLLLKHGADPTK, DGNTPLDLVKEGDTDIQDLLRGDAALLDA, RNSTPLHLAAGYNNLEVAEYLLEHGADVNA, GGLIPLHNAASYGHVDIAALLIKYNTCVNA, WAFTPLHEAAQKGRTQLCALLLAHGADPTM, and EGQTPLDLATADDIRALLIDAMPPEALPTC. Positions 1019 to 1082 constitute an SAM domain; it reads GLDMNISQFL…IKGVERLLGG (64 aa). Positions 1105–1310 constitute a PARP catalytic domain; it reads APEDKEYQSV…YQIMKPEAPS (206 aa). Residues Cys1227, His1230, Cys1235, and Cys1238 each contribute to the Zn(2+) site.

It belongs to the ARTD/PARP family. As to quaternary structure, oligomerizes and associates with TNKS2. Interacts with the cytoplasmic domain of LNPEP/Otase in SLC2A4/GLUT4-vesicles. Binds to the N-terminus of telomeric TERF1 via the ANK repeats. Found in a complex with POT1; TERF1 and TINF2. Interacts with AXIN1. Interacts with AXIN2. Interacts with BLZF1 and CASC3. Interacts with NUMA1. Post-translationally, phosphorylated on serine residues by MAPK kinases upon insulin stimulation. Phosphorylated during mitosis. In terms of processing, ubiquitinated by RNF146 when auto-poly-ADP-ribosylated, leading to its degradation. ADP-ribosylated (-auto). Poly-ADP-ribosylated protein is recognized by RNF146, followed by ubiquitination.

The protein localises to the cytoplasm. The protein resides in the golgi apparatus membrane. Its subcellular location is the cytoskeleton. It localises to the microtubule organizing center. It is found in the centrosome. The protein localises to the nucleus. The protein resides in the nuclear pore complex. Its subcellular location is the chromosome. It localises to the telomere. It is found in the spindle pole. The catalysed reaction is NAD(+) + (ADP-D-ribosyl)n-acceptor = nicotinamide + (ADP-D-ribosyl)n+1-acceptor + H(+).. It carries out the reaction L-aspartyl-[protein] + NAD(+) = 4-O-(ADP-D-ribosyl)-L-aspartyl-[protein] + nicotinamide. The enzyme catalyses L-glutamyl-[protein] + NAD(+) = 5-O-(ADP-D-ribosyl)-L-glutamyl-[protein] + nicotinamide. Its function is as follows. Poly-ADP-ribosyltransferase involved in various processes such as Wnt signaling pathway, telomere length and vesicle trafficking. Acts as an activator of the Wnt signaling pathway by mediating poly-ADP-ribosylation (PARsylation) of AXIN1 and AXIN2, 2 key components of the beta-catenin destruction complex: poly-ADP-ribosylated target proteins are recognized by RNF146, which mediates their ubiquitination and subsequent degradation. Also mediates PARsylation of BLZF1 and CASC3, followed by recruitment of RNF146 and subsequent ubiquitination. Mediates PARsylation of TERF1, thereby contributing to the regulation of telomere length. Involved in centrosome maturation during prometaphase by mediating PARsylation of HEPACAM2/MIKI. May also regulate vesicle trafficking and modulate the subcellular distribution of SLC2A4/GLUT4-vesicles. May be involved in spindle pole assembly through PARsylation of NUMA1. Stimulates 26S proteasome activity. The sequence is that of Poly [ADP-ribose] polymerase tankyrase-1 (Tnks) from Mus musculus (Mouse).